Reading from the N-terminus, the 197-residue chain is Peptidyl-tRNA hydrolase (197 aa).

Tyr18 contributes to the tRNA binding site. The active-site Proton acceptor is the His23. The tRNA site is built by Phe69, Asn71, and Asn117.

This sequence belongs to the PTH family. Monomer.

The protein resides in the cytoplasm. The enzyme catalyses an N-acyl-L-alpha-aminoacyl-tRNA + H2O = an N-acyl-L-amino acid + a tRNA + H(+). In terms of biological role, hydrolyzes ribosome-free peptidyl-tRNAs (with 1 or more amino acids incorporated), which drop off the ribosome during protein synthesis, or as a result of ribosome stalling. Functionally, catalyzes the release of premature peptidyl moieties from peptidyl-tRNA molecules trapped in stalled 50S ribosomal subunits, and thus maintains levels of free tRNAs and 50S ribosomes. The protein is Peptidyl-tRNA hydrolase of Psychromonas ingrahamii (strain DSM 17664 / CCUG 51855 / 37).